The following is a 158-amino-acid chain: Phosphopantetheine adenylyltransferase (158 aa).

Position 8 (S8) interacts with substrate. ATP-binding positions include 8 to 9 and H16; that span reads SF. 3 residues coordinate substrate: K40, T72, and R86. ATP contacts are provided by residues 87-89, E97, and 122-128; these read GLR and HSFLSSS.

This sequence belongs to the bacterial CoaD family. Homohexamer. Mg(2+) is required as a cofactor.

It localises to the cytoplasm. The enzyme catalyses (R)-4'-phosphopantetheine + ATP + H(+) = 3'-dephospho-CoA + diphosphate. It functions in the pathway cofactor biosynthesis; coenzyme A biosynthesis; CoA from (R)-pantothenate: step 4/5. Reversibly transfers an adenylyl group from ATP to 4'-phosphopantetheine, yielding dephospho-CoA (dPCoA) and pyrophosphate. The polypeptide is Phosphopantetheine adenylyltransferase (Prochlorococcus marinus (strain NATL2A)).